The following is a 125-amino-acid chain: Alpha-endosulfine (125 aa).

The span at 1–37 (MSDKYIGDSHLEETGEEKQDSQEKEAVTPEKAEEQKL) shows a compositional bias: basic and acidic residues. A disordered region spans residues 1–52 (MSDKYIGDSHLEETGEEKQDSQEKEAVTPEKAEEQKLKAKYPNLGQKPGGSD). Threonine 28 carries the post-translational modification Phosphothreonine; by CDK2. Serine 67 bears the Phosphoserine; by GWL mark. The interval 86 to 107 (GPDKNLVTGDHIPTPQDLPQRK) is disordered. Threonine 99 carries the phosphothreonine; by CDK2 modification. At serine 109 the chain carries Phosphoserine; by PKA.

It belongs to the endosulfine family. In terms of assembly, interacts (when phosphorylated at Ser-67) with ppp2r2d. Phosphorylation at Ser-67 by gwl during mitosis is essential for interaction with PPP2R2D (PR55-delta) and subsequent inactivation of PP2A. Phosphorylated by PKA.

It localises to the cytoplasm. In terms of biological role, protein phosphatase inhibitor that specifically inhibits protein phosphatase 2A (PP2A) during mitosis. When phosphorylated at Ser-67 during mitosis, specifically interacts with ppp2r2d (PR55-delta) and inhibits its activity, leading to inactivation of PP2A, an essential condition to keep cyclin-B1-CDK1 activity high during M phase. This chain is Alpha-endosulfine (ensa), found in Xenopus laevis (African clawed frog).